Reading from the N-terminus, the 332-residue chain is Biotin synthase (332 aa).

The region spanning Y51–R279 is the Radical SAM core domain. Residues C66, C70, and C73 each coordinate [4Fe-4S] cluster. 4 residues coordinate [2Fe-2S] cluster: C110, C142, C202, and R274.

This sequence belongs to the radical SAM superfamily. Biotin synthase family. Homodimer. The cofactor is [4Fe-4S] cluster. It depends on [2Fe-2S] cluster as a cofactor.

It catalyses the reaction (4R,5S)-dethiobiotin + (sulfur carrier)-SH + 2 reduced [2Fe-2S]-[ferredoxin] + 2 S-adenosyl-L-methionine = (sulfur carrier)-H + biotin + 2 5'-deoxyadenosine + 2 L-methionine + 2 oxidized [2Fe-2S]-[ferredoxin]. It participates in cofactor biosynthesis; biotin biosynthesis; biotin from 7,8-diaminononanoate: step 2/2. In terms of biological role, catalyzes the conversion of dethiobiotin (DTB) to biotin by the insertion of a sulfur atom into dethiobiotin via a radical-based mechanism. This Prochlorococcus marinus (strain MIT 9211) protein is Biotin synthase.